The primary structure comprises 131 residues: Small ribosomal subunit protein uS8 (131 aa).

It belongs to the universal ribosomal protein uS8 family. As to quaternary structure, part of the 30S ribosomal subunit. Contacts proteins S5 and S12.

One of the primary rRNA binding proteins, it binds directly to 16S rRNA central domain where it helps coordinate assembly of the platform of the 30S subunit. This chain is Small ribosomal subunit protein uS8, found in Hamiltonella defensa subsp. Acyrthosiphon pisum (strain 5AT).